The primary structure comprises 490 residues: Fumitremorgin C monooxygenase (490 aa).

Residues 12 to 32 (LGVVGASLIVILGIILLFPLG) traverse the membrane as a helical segment. Position 442 (cysteine 442) interacts with heme.

Belongs to the cytochrome P450 family. Heme is required as a cofactor.

The protein localises to the membrane. The enzyme catalyses fumitremorgin C + 2 reduced [NADPH--hemoprotein reductase] + 2 O2 = 12alpha,13alpha-dihydroxyfumitremorgin C + 2 oxidized [NADPH--hemoprotein reductase] + 2 H2O + 2 H(+). The protein operates within mycotoxin biosynthesis. Its function is as follows. Cytochrome P450 monooxygenase; part of the gene cluster that mediates the biosynthesis of fumitremorgins, indole alkaloids that carry not only intriguing chemical structures, but also interesting biological and pharmacological activities. The biosynthesis of fumitremorgin-type alkaloids begins by condensation of the two amino acids L-tryptophan and L-proline to brevianamide F, catalyzed by the non-ribosomal peptide synthetase ftmA. Brevianamide F is then prenylated by the prenyltransferase ftmPT1/ftmB in the presence of dimethylallyl diphosphate, resulting in the formation of tryprostatin B. The three cytochrome P450 monooxygenases, ftmP450-1/ftmC, ftmP450-2/ftmE and ftmP450-3/FtmG, are responsible for the conversion of tryprostatin B to 6-hydroxytryprostatin B, tryprostatin A to fumitremorgin C and fumitremorgin C to 12,13-dihydroxyfumitremorgin C, respectively. The putative methyltransferase ftmMT/ftmD is expected for the conversion of 6-hydroxytryprostatin B to tryprostatin A. FtmPT2/FtmH catalyzes the prenylation of 12,13-dihydroxyfumitre-morgin C in the presence of dimethylallyl diphosphate, resulting in the formation of fumitremorgin B. Fumitremorgin B is further converted to verruculogen by ftmOx1/ftmF via the insertion of an endoperoxide bond between the two prenyl moieties. In some fungal species, verruculogen is further converted to fumitremorgin A, but the enzymes involved in this step have not been identified yet. This Aspergillus fumigatus (strain ATCC MYA-4609 / CBS 101355 / FGSC A1100 / Af293) (Neosartorya fumigata) protein is Fumitremorgin C monooxygenase.